The sequence spans 530 residues: [Pyruvate dehydrogenase [acetyl-transferring]]-phosphatase 2, mitochondrial (530 aa).

The N-terminal 67 residues, 1–67 (MSSTASYRIF…FALRKAYRHT (67 aa)), are a transit peptide targeting the mitochondrion. One can recognise a PPM-type phosphatase domain in the interval 107-518 (VLRFESNQLA…DDITVMVVFF (412 aa)). Residues Asp142, Gly143, Asp413, and Asp509 each contribute to the Mn(2+) site.

It belongs to the PP2C family. Mg(2+) is required as a cofactor. In terms of tissue distribution, highly expressed in liver.

The protein localises to the mitochondrion. The catalysed reaction is O-phospho-L-seryl-[pyruvate dehydrogenase E1 alpha subunit] + H2O = L-seryl-[pyruvate dehydrogenase E1 alpha subunit] + phosphate. Its activity is regulated as follows. Mg(2+)-dependent protein phosphatase. Phosphatase activity is increased in the presence of spermine, a naturally produced polyamine. Mitochondrial enzyme that catalyzes the dephosphorylation and concomitant reactivation of the alpha subunit of the E1 component of the pyruvate dehydrogenase complex (PDC), thereby stimulating the conversion of pyruvate into acetyl-CoA. Acts as a crucial regulator of T cell metabolism and function, with a particular focus on T-helper Th17. The chain is [Pyruvate dehydrogenase [acetyl-transferring]]-phosphatase 2, mitochondrial (Pdp2) from Rattus norvegicus (Rat).